Reading from the N-terminus, the 105-residue chain is NADH-quinone oxidoreductase subunit K (105 aa).

3 helical membrane-spanning segments follow: residues 7 to 27 (IGVN…MFAV), 34 to 54 (IVIL…FLTF), and 66 to 86 (FSLF…AIVI).

The protein belongs to the complex I subunit 4L family. As to quaternary structure, NDH-1 is composed of 14 different subunits. Subunits NuoA, H, J, K, L, M, N constitute the membrane sector of the complex.

The protein localises to the cell inner membrane. The enzyme catalyses a quinone + NADH + 5 H(+)(in) = a quinol + NAD(+) + 4 H(+)(out). Functionally, NDH-1 shuttles electrons from NADH, via FMN and iron-sulfur (Fe-S) centers, to quinones in the respiratory chain. The immediate electron acceptor for the enzyme in this species is believed to be a menaquinone. Couples the redox reaction to proton translocation (for every two electrons transferred, four hydrogen ions are translocated across the cytoplasmic membrane), and thus conserves the redox energy in a proton gradient. This Chlorobaculum parvum (strain DSM 263 / NCIMB 8327) (Chlorobium vibrioforme subsp. thiosulfatophilum) protein is NADH-quinone oxidoreductase subunit K.